A 213-amino-acid polypeptide reads, in one-letter code: Small ribosomal subunit protein uS3 (213 aa).

The region spanning 38–106 (IRAFVKKLLY…EFSLEVNEIR (69 aa)) is the KH type-2 domain.

It belongs to the universal ribosomal protein uS3 family. Part of the 30S ribosomal subunit. Forms a tight complex with proteins S10 and S14.

In terms of biological role, binds the lower part of the 30S subunit head. Binds mRNA in the 70S ribosome, positioning it for translation. The polypeptide is Small ribosomal subunit protein uS3 (Desulfovibrio desulfuricans (strain ATCC 27774 / DSM 6949 / MB)).